Reading from the N-terminus, the 106-residue chain is Iron-sulfur cluster assembly protein CyaY (106 aa).

This sequence belongs to the frataxin family.

Functionally, involved in iron-sulfur (Fe-S) cluster assembly. May act as a regulator of Fe-S biogenesis. This is Iron-sulfur cluster assembly protein CyaY from Yersinia enterocolitica serotype O:8 / biotype 1B (strain NCTC 13174 / 8081).